The chain runs to 256 residues: 6-phosphogluconolactonase (256 aa).

This sequence belongs to the glucosamine/galactosamine-6-phosphate isomerase family. 6-phosphogluconolactonase subfamily.

The enzyme catalyses 6-phospho-D-glucono-1,5-lactone + H2O = 6-phospho-D-gluconate + H(+). It functions in the pathway carbohydrate degradation; pentose phosphate pathway; D-ribulose 5-phosphate from D-glucose 6-phosphate (oxidative stage): step 2/3. Functionally, hydrolysis of 6-phosphogluconolactone to 6-phosphogluconate. The sequence is that of 6-phosphogluconolactonase (pgl) from Chlamydia muridarum (strain MoPn / Nigg).